Reading from the N-terminus, the 364-residue chain is MELSPNNSTDQSLLDAQLELWHTTFAFMKSMALKSAIHLRIADAIHLHGGAASLSQILSKVHLHPSRVSSLRRLMRVLTTTNVFGTQPLGGGSDDDSEPVYTLTPVSRLLIGSQSSQLAQTPLAAMVLDPTIVSPFSELGAWFQHELPDPCIFKHTHGRGIWELTKDDATFDALVNDGLASDSQLIVDVAIKQSAEVFQGISSLVDVGGGIGAAAQAISKAFPHVKCSVLDLAHVVAKAPTHTDVQFIAGDMFESIPPADAVLLKSVLHDWDHDDCVKILKNCKKAIPPREAGGKVIIINMVVGAGPSDMKHKEMQAIFDVYIMFINGMERDEQEWSKIFSEAGYSDYRIIPVLGVRSIIEVYP.

Residues glycine 208, aspartate 231, aspartate 251, methionine 252, and lysine 265 each contribute to the S-adenosyl-L-methionine site. Catalysis depends on histidine 269, which acts as the Proton acceptor.

Belongs to the class I-like SAM-binding methyltransferase superfamily. Cation-independent O-methyltransferase family. COMT subfamily. As to quaternary structure, homodimer. Accumulates preferentially in the roots and is located predominantly in the region of the endodermis, low levels are seen in the leaves, stems and other shoot organs.

Functionally, may be involved in the O-methylation of suberin phenylpropanoid precursors. The sequence is that of O-methyltransferase ZRP4 (ZRP4) from Zea mays (Maize).